Reading from the N-terminus, the 284-residue chain is Bifunctional protein FolD (284 aa).

NADP(+) is bound by residues 166-168 and Ile-232; that span reads GAS.

This sequence belongs to the tetrahydrofolate dehydrogenase/cyclohydrolase family. As to quaternary structure, homodimer.

The catalysed reaction is (6R)-5,10-methylene-5,6,7,8-tetrahydrofolate + NADP(+) = (6R)-5,10-methenyltetrahydrofolate + NADPH. It catalyses the reaction (6R)-5,10-methenyltetrahydrofolate + H2O = (6R)-10-formyltetrahydrofolate + H(+). It functions in the pathway one-carbon metabolism; tetrahydrofolate interconversion. In terms of biological role, catalyzes the oxidation of 5,10-methylenetetrahydrofolate to 5,10-methenyltetrahydrofolate and then the hydrolysis of 5,10-methenyltetrahydrofolate to 10-formyltetrahydrofolate. The sequence is that of Bifunctional protein FolD from Shewanella oneidensis (strain ATCC 700550 / JCM 31522 / CIP 106686 / LMG 19005 / NCIMB 14063 / MR-1).